Here is a 227-residue protein sequence, read N- to C-terminus: Superoxide dismutase [Cu-Zn] (227 aa).

The N-terminal stretch at 1–19 (MPKLLPPVVLAGCVVALGA) is a signal peptide. Cys-20 carries N-palmitoyl cysteine lipidation. Cys-20 carries S-diacylglycerol cysteine lipidation. Residues 23-55 (PQHASSLPGTTPAVWTGSPSPSGAGAAEAAPAA) form a disordered region. Over residues 39 to 55 (GSPSPSGAGAAEAAPAA) the composition is skewed to low complexity. Residues His-103 and His-105 each coordinate Cu cation. A disulfide bridge connects residues Cys-110 and Cys-221. Asp-145 lines the Zn(2+) pocket. His-182 serves as a coordination point for Cu cation.

It belongs to the Cu-Zn superoxide dismutase family. The cofactor is Cu cation. Zn(2+) serves as cofactor.

The protein resides in the cell membrane. It carries out the reaction 2 superoxide + 2 H(+) = H2O2 + O2. Destroys radicals which are normally produced within the cells and which are toxic to biological systems. May play a role in favoring mycobacterial survival in phagocytes. This chain is Superoxide dismutase [Cu-Zn] (sodC), found in Mycolicibacterium paratuberculosis (strain ATCC BAA-968 / K-10) (Mycobacterium paratuberculosis).